The following is a 584-amino-acid chain: Optineurin (584 aa).

Positions 1 to 32 (MSHQPLSCLTEKGDSPCETPGNGPSNMVHPSL) are disordered. Residues 38 to 180 (EELLQQMKEL…VSELQLKLNS (143 aa)) are a coiled coil. The interaction with Rab8 stretch occupies residues 58–219 (MKLNNQAMKG…TPTRTDPISL (162 aa)). Residues 186 to 191 (DSFVEI) carry the LIR motif. Ser187 is modified (phosphoserine). Coiled coils occupy residues 243 to 278 (CLREGNQKVERLEVALREAKERISDFEKKANGHSST) and 307 to 511 (IQVT…DIEE). Residues 267–295 (DFEKKANGHSSTEKQTARRADREKEDKGQ) are compositionally biased toward basic and acidic residues. Residues 267 to 302 (DFEKKANGHSSTEKQTARRADREKEDKGQESVGSEV) form a disordered region. Ser345 is modified (phosphoserine). The tract at residues 414–584 (TKQQAEKVDK…LQIHVMDCII (171 aa)) is interaction with HD. The interaction with MYO6 stretch occupies residues 415-524 (KQQAEKVDKM…RQSLMEMQCR (110 aa)). The short motif at 477-482 (DFHAER) is the UBAN element. Phosphoserine is present on Ser530. The segment at 554–584 (PRSIPIHSCPKCGEVLPDIDTLQIHVMDCII) adopts a CCHC NOA-type zinc-finger fold. Positions 562, 565, 578, and 582 each coordinate Zn(2+).

In terms of assembly, self-associates. Interacts with HD, GTF3A, TRAF3, TBK1 and MYO6. Interacts (via UBAN) with ubiquitinated TFRC. Interacts with active GTP-bound Rab8 (RAB8A and/or RAB8B). Interacts with TBC1D17. Binds to linear ubiquitin chains. Interacts with LC3 family members MAP1LC3A, MAP1LC3B, GABARAP, GABARAPL1 and GABARAPL2; OPTN phosphorylation increases the association (at least with MAP1LC3B). Interacts with RAB12; the interaction may be indirect. Interacts with TBK1; this interaction leads to the Golgi localization of TBK1 and its subsequent activation. Interacts with palmitoyltransferase ZDHHC17/HIP14; the interaction does not lead to palmitoylation of OPTN. Interacts with CYLD. Interacts with TOM1; the interaction is indirect and is mediated by MYO6, which acts as a bridge between TOM1 and OPTN. Interacts with USP12; the interaction is independent of USP12 deubiquitinase activity and may be involved in regulation of autophagic flux. Phosphorylated by TBK1, leading to restrict bacterial proliferation in case of infection. In terms of tissue distribution, in eye, it is expressed in anterior segment, retina, and optic nerve blood vessels (at protein level). Highly expressed in adult liver, heart and testis.

It localises to the cytoplasm. It is found in the perinuclear region. The protein resides in the golgi apparatus. Its subcellular location is the trans-Golgi network. The protein localises to the cytoplasmic vesicle. It localises to the autophagosome. It is found in the recycling endosome. Plays an important role in the maintenance of the Golgi complex, in membrane trafficking, in exocytosis, through its interaction with myosin VI and Rab8. Links myosin VI to the Golgi complex and plays an important role in Golgi ribbon formation. Plays a role in the activation of innate immune response during viral infection. Mechanistically, recruits TBK1 at the Golgi apparatus, promoting its trans-phosphorylation after RLR or TLR3 stimulation. In turn, activated TBK1 phosphorylates its downstream partner IRF3 to produce IFN-beta. Plays a neuroprotective role in the eye and optic nerve. May act by regulating membrane trafficking and cellular morphogenesis via a complex that contains Rab8 and huntingtin (HD). Mediates the interaction of Rab8 with the probable GTPase-activating protein TBC1D17 during Rab8-mediated endocytic trafficking, such as that of transferrin receptor (TFRC/TfR); regulates Rab8 recruitment to tubules emanating from the endocytic recycling compartment. Autophagy receptor that interacts directly with both the cargo to become degraded and an autophagy modifier of the MAP1 LC3 family; targets ubiquitin-coated bacteria (xenophagy), such as cytoplasmic Salmonella enterica, and appears to function in the same pathway as SQSTM1 and CALCOCO2/NDP52. This is Optineurin (Optn) from Mus musculus (Mouse).